The following is a 293-amino-acid chain: MQIIHTIEELRQALAPARQQGKKIGFVPTMGYLHKGHLELVRRARVENDVTLVSIFVNPLQFGANEDLGRYPRDLERDAGLLHDAQVDYLFAPTVSDMYPRPMQTVVDVPPLGNQIEGEARPGHFAGVATVVSKLFNIVGPDAAYFGEKDFQQLVIIRRMVDDMAIPVRIVGVETVREDDGLACSSRNVYLTPEQRRAAIIVPQALDEADRLYRSGMDDPDALEAAIRTFIGRQPLAVPEVIAIRDPETLERLPALQGRPILVALFVRVGATRLLDNRVIGHAAPQITQERAA.

Residue 30-37 (MGYLHKGH) participates in ATP binding. His37 serves as the catalytic Proton donor. Gln61 is a binding site for (R)-pantoate. Gln61 provides a ligand contact to beta-alanine. ATP is bound at residue 147–150 (GEKD). Residue Gln153 coordinates (R)-pantoate. ATP-binding positions include Val176 and 184 to 187 (CSSR).

It belongs to the pantothenate synthetase family. Homodimer.

The protein localises to the cytoplasm. The enzyme catalyses (R)-pantoate + beta-alanine + ATP = (R)-pantothenate + AMP + diphosphate + H(+). Its pathway is cofactor biosynthesis; (R)-pantothenate biosynthesis; (R)-pantothenate from (R)-pantoate and beta-alanine: step 1/1. Its function is as follows. Catalyzes the condensation of pantoate with beta-alanine in an ATP-dependent reaction via a pantoyl-adenylate intermediate. The protein is Pantothenate synthetase of Brucella abortus (strain S19).